The sequence spans 596 residues: Putative terpenoid synthase 5 (596 aa).

Residues aspartate 349, aspartate 353, asparagine 481, and aspartate 489 each coordinate Mg(2+). The DDXXD motif signature appears at 349–353; that stretch reads DDTCD.

It belongs to the terpene synthase family. Tpsa subfamily. Mg(2+) is required as a cofactor. The cofactor is Mn(2+).

Its subcellular location is the cytoplasm. Its pathway is secondary metabolite biosynthesis; terpenoid biosynthesis. The polypeptide is Putative terpenoid synthase 5 (TPS05) (Arabidopsis thaliana (Mouse-ear cress)).